The chain runs to 469 residues: 3-isopropylmalate dehydratase large subunit (469 aa).

Positions 349, 410, and 413 each coordinate [4Fe-4S] cluster.

The protein belongs to the aconitase/IPM isomerase family. LeuC type 1 subfamily. As to quaternary structure, heterodimer of LeuC and LeuD. [4Fe-4S] cluster is required as a cofactor.

It catalyses the reaction (2R,3S)-3-isopropylmalate = (2S)-2-isopropylmalate. The protein operates within amino-acid biosynthesis; L-leucine biosynthesis; L-leucine from 3-methyl-2-oxobutanoate: step 2/4. In terms of biological role, catalyzes the isomerization between 2-isopropylmalate and 3-isopropylmalate, via the formation of 2-isopropylmaleate. In Azoarcus sp. (strain BH72), this protein is 3-isopropylmalate dehydratase large subunit.